A 300-amino-acid polypeptide reads, in one-letter code: MTYPGYSFTPKRLDVRPGIAMSYLDEGPSDGEVVVMLHGNPSWGYLWRHLVSGLSDRYRCIVPDHIGMGLSDKPDDAPDAQPRYDYTLQSRVDDLDRLLQHLGITGPITLAVHDWGGMIGFGWALSHHAQVKRLVITNTAAFPLPPEKPMPWQIAMGRHWRLGEWFIRTFNAFSSGASWLGVSRRMPAAVRRAYVAPYDNWKNRISTIRFMQDIPLSPADQAWSLLERSAQALPSFADRPAFIAWGLRDICFDKHFLAGFRRALPQAEVMAFDDANHYVLEDKHEVLVPAIRAFLERNPL.

The 250-residue stretch at 33–282 (VVVMLHGNPS…DDANHYVLED (250 aa)) folds into the AB hydrolase-1 domain.

The protein belongs to the AB hydrolase superfamily. As to quaternary structure, homotetramer. Forms a complex with OleC and OleD.

Its subcellular location is the cytoplasm. It catalyses the reaction a cis-3-alkyl-4-alkyloxetan-2-one = a cis-alkene + CO2. Its function is as follows. Involved in olefin biosynthesis. Catalyzes the elimination of carbon dioxide from beta-lactones to form the final olefin product. The protein is Cis-3-alkyl-4-alkyloxetan-2-one decarboxylase of Xanthomonas campestris pv. campestris (strain ATCC 33913 / DSM 3586 / NCPPB 528 / LMG 568 / P 25).